A 107-amino-acid chain; its full sequence is Insulin-like peptide 6 (107 aa).

The N-terminal stretch at 1–33 (MVLKVPTSKVLLVLATLFAVAAMISSWMPQVAA) is a signal peptide. 3 cysteine pairs are disulfide-bonded: Cys-48–Cys-91, Cys-60–Cys-105, and Cys-90–Cys-96. Residues 67 to 76 (LGDVFPNSFG) constitute a propeptide, connecting peptide.

It belongs to the insulin family. As to quaternary structure, heterodimer of a B chain and an A chain linked by two disulfide bonds. In terms of tissue distribution, expressed at a low level in the larval gut.

Its subcellular location is the secreted. Possible ligand of InR/insulin-like receptor. This Drosophila melanogaster (Fruit fly) protein is Insulin-like peptide 6.